Here is a 113-residue protein sequence, read N- to C-terminus: Parvalbumin beta (113 aa).

At alanine 1 the chain carries N-acetylalanine. The S-linked (Glc) cysteine glycan is linked to cysteine 18. EF-hand domains lie at 38-73 (FSAD…FAAD) and 77-112 (LTDA…WGAK). Ca(2+) contacts are provided by aspartate 51, aspartate 53, glutamate 55, phenylalanine 57, glutamate 59, glutamate 62, aspartate 90, aspartate 92, aspartate 94, lysine 96, and glutamate 101.

It belongs to the parvalbumin family. As to expression, muscle (at protein level).

In terms of biological role, in muscle, parvalbumin is thought to be involved in relaxation after contraction. It binds two calcium ions. This is Parvalbumin beta from Gadus morhua subsp. callarias (Baltic cod).